The primary structure comprises 354 residues: Annexin A13 (354 aa).

4 Annexin repeats span residues 26 to 97 (NDPN…MLLT), 98 to 177 (DTDK…ALLQ), 203 to 275 (NLVE…LTLN), and 279 to 350 (NRPK…ALIG). Methionine 39, glycine 41, glycine 43, threonine 44, glutamate 46, glutamate 83, methionine 111, glycine 113, glycine 115, glutamate 118, aspartate 163, aspartate 265, methionine 292, glycine 294, leucine 295, glycine 296, and glutamate 336 together coordinate Ca(2+).

This sequence belongs to the annexin family. In terms of assembly, homodimer.

The protein localises to the tegument. The protein resides in the secreted. It localises to the extracellular exosome. It is found in the host cell. In terms of biological role, involved in reproduction of the worm. Involved in host-parasite interaction. Delivered into the host cell by means of parasite exosomes. Binds to acidic phospholipid membranes in a calcium-dependent manner in vitro. Causes aggregation of liposomes in the presence of calcium, but not in its absence. Likely to promote membrane fusion. May provide structural integrity within the tegument. The polypeptide is Annexin A13 (Schistosoma japonicum (Blood fluke)).